We begin with the raw amino-acid sequence, 386 residues long: uncharacterized protein (386 aa).

A run of 9 helical transmembrane segments spans residues 48–68 (NLIT…MLVY), 78–98 (PSWV…FDAI), 136–156 (LQLD…YFYI), 171–191 (YFSG…LTAI), 213–233 (FLPY…ALLL), 253–273 (VIKA…VFSL), 285–305 (FLTI…VVIV), 316–336 (WNVL…FGVL), and 344–364 (FFCY…HVIA).

It belongs to the CDP-alcohol phosphatidyltransferase class-I family.

Its subcellular location is the membrane. This is an uncharacterized protein from Schizosaccharomyces pombe (strain 972 / ATCC 24843) (Fission yeast).